We begin with the raw amino-acid sequence, 48 residues long: Glycine-rich RNA-binding protein 2 (48 aa).

This is Glycine-rich RNA-binding protein 2 from Populus euphratica (Euphrates poplar).